The following is a 201-amino-acid chain: Ribonuclease HII (201 aa).

In terms of domain architecture, RNase H type-2 spans 12–201; the sequence is DLVAGVDEVG…VRELLDVSVQ (190 aa). A divalent metal cation is bound by residues aspartate 18, glutamate 19, and aspartate 110.

It belongs to the RNase HII family. Requires Mn(2+) as cofactor. Mg(2+) serves as cofactor.

Its subcellular location is the cytoplasm. It carries out the reaction Endonucleolytic cleavage to 5'-phosphomonoester.. In terms of biological role, endonuclease that specifically degrades the RNA of RNA-DNA hybrids. The chain is Ribonuclease HII from Pseudomonas aeruginosa (strain LESB58).